A 602-amino-acid chain; its full sequence is Elongation factor 4 (602 aa).

In terms of domain architecture, tr-type G spans 7 to 189; the sequence is SKIRNFCIIA…AIVRRVPPPQ (183 aa). GTP-binding positions include 19-24 and 136-139; these read DHGKST and NKVD.

The protein belongs to the TRAFAC class translation factor GTPase superfamily. Classic translation factor GTPase family. LepA subfamily.

The protein localises to the cell inner membrane. It carries out the reaction GTP + H2O = GDP + phosphate + H(+). Its function is as follows. Required for accurate and efficient protein synthesis under certain stress conditions. May act as a fidelity factor of the translation reaction, by catalyzing a one-codon backward translocation of tRNAs on improperly translocated ribosomes. Back-translocation proceeds from a post-translocation (POST) complex to a pre-translocation (PRE) complex, thus giving elongation factor G a second chance to translocate the tRNAs correctly. Binds to ribosomes in a GTP-dependent manner. The sequence is that of Elongation factor 4 from Prochlorococcus marinus (strain MIT 9301).